The following is a 249-amino-acid chain: Flavodoxin/ferredoxin--NADP reductase (249 aa).

The region spanning 2-102 is the FAD-binding FR-type domain; sequence NTWITAKIIK…KKSYGFFTLN (101 aa). FAD contacts are provided by residues 51–54, Y67, 75–77, and T117; these read RAYS and QLT. NADP(+) is bound by residues 144 to 145, 174 to 175, R185, and 215 to 217; these read VR, SR, and NPD. Position 248–249 (248–249) interacts with FAD; it reads YW.

It belongs to the ferredoxin--NADP reductase type 1 family. FAD is required as a cofactor.

The protein localises to the cytoplasm. The catalysed reaction is 2 reduced [2Fe-2S]-[ferredoxin] + NADP(+) + H(+) = 2 oxidized [2Fe-2S]-[ferredoxin] + NADPH. It catalyses the reaction reduced [flavodoxin] + NADP(+) = oxidized [flavodoxin] + NADPH + 2 H(+). Transports electrons between flavodoxin or ferredoxin and NADPH. This is Flavodoxin/ferredoxin--NADP reductase (fpr) from Buchnera aphidicola subsp. Baizongia pistaciae (strain Bp).